Here is a 309-residue protein sequence, read N- to C-terminus: Olfactory receptor 1A1 (309 aa).

Residues 1–25 lie on the Extracellular side of the membrane; it reads MRENNQSSTLEFILLGVTGQQEQED. N-linked (GlcNAc...) asparagine glycosylation is present at Asn-5. A helical membrane pass occupies residues 26–49; sequence FFYILFLFIYPITLIGNLLIVLAI. At 50–57 the chain is on the cytoplasmic side; the sequence is CSDVHLHN. The helical transmembrane segment at 58–79 threads the bilayer; it reads PMYFLLANLSLVDIFFSSVTIP. Topologically, residues 80-100 are extracellular; sequence KMLANHLLGSKSISFGGCLTQ. Residues Cys-97 and Cys-189 are joined by a disulfide bond. Residues 101–120 traverse the membrane as a helical segment; it reads MYFMIALGNTDSYILAAMAY. At 121 to 139 the chain is on the cytoplasmic side; the sequence is DRAVAISRPLHYTTIMSPR. A helical transmembrane segment spans residues 140–158; it reads SCIWLIAGSWVIGNANALP. At 159 to 195 the chain is on the extracellular side; that stretch reads HTLLTASLSFCGNQEVANFYCDITPLLKLSCSDIHFH. The chain crosses the membrane as a helical span at residues 196 to 218; that stretch reads VKMMYLGVGIFSVPLLCIIVSYI. Over 219-235 the chain is Cytoplasmic; the sequence is RVFSTVFQVPSTKGVLK. The helical transmembrane segment at 236 to 258 threads the bilayer; the sequence is AFSTCGSHLTVVSLYYGTVMGMY. Residues 259–270 lie on the Extracellular side of the membrane; sequence FRPLTNYSLKDA. Asn-264 carries N-linked (GlcNAc...) asparagine glycosylation. A helical membrane pass occupies residues 271 to 290; sequence VITVMYTAVTPMLNPFIYSL. Over 291 to 309 the chain is Cytoplasmic; the sequence is RNRDVKAALRKLFNKRISS.

This sequence belongs to the G-protein coupled receptor 1 family.

The protein localises to the cell membrane. Odorant receptor. This chain is Olfactory receptor 1A1 (OR1A1), found in Pan troglodytes (Chimpanzee).